Here is a 79-residue protein sequence, read N- to C-terminus: Small ribosomal subunit protein uS17 (79 aa).

This sequence belongs to the universal ribosomal protein uS17 family. In terms of assembly, part of the 30S ribosomal subunit.

Its function is as follows. One of the primary rRNA binding proteins, it binds specifically to the 5'-end of 16S ribosomal RNA. The chain is Small ribosomal subunit protein uS17 from Bartonella tribocorum (strain CIP 105476 / IBS 506).